The sequence spans 152 residues: MSTVPVVQGAGSSNSAQDISTSSAPLTLKERISNLLSSTAFKVGLVVIGLLLVIATLIFLVSAASFVNAIYLVAIPAILGCVNICVGILSMEGHCSPERWILCKKVLKTSEDIIDDGQINNSNKVFTDERLNAIDGVVESLSRRNSLVDQTQ.

The disordered stretch occupies residues 1 to 20 (MSTVPVVQGAGSSNSAQDIS). 2 helical membrane-spanning segments follow: residues 43–63 (VGLVVIGLLLVIATLIFLVSA) and 69–89 (AIYLVAIPAILGCVNICVGIL).

It localises to the membrane. The sequence is that of Sulfur-rich protein (srp) from Chlamydia trachomatis serovar A (strain ATCC VR-571B / DSM 19440 / HAR-13).